Consider the following 296-residue polypeptide: tRNA-cytidine(32) 2-sulfurtransferase (296 aa).

Positions 72 to 77 (SGGKDS) match the PP-loop motif motif. C147, C150, and C238 together coordinate [4Fe-4S] cluster.

This sequence belongs to the TtcA family. In terms of assembly, homodimer. It depends on Mg(2+) as a cofactor. [4Fe-4S] cluster serves as cofactor.

The protein localises to the cytoplasm. The enzyme catalyses cytidine(32) in tRNA + S-sulfanyl-L-cysteinyl-[cysteine desulfurase] + AH2 + ATP = 2-thiocytidine(32) in tRNA + L-cysteinyl-[cysteine desulfurase] + A + AMP + diphosphate + H(+). The protein operates within tRNA modification. In terms of biological role, catalyzes the ATP-dependent 2-thiolation of cytidine in position 32 of tRNA, to form 2-thiocytidine (s(2)C32). The sulfur atoms are provided by the cysteine/cysteine desulfurase (IscS) system. This is tRNA-cytidine(32) 2-sulfurtransferase from Sinorhizobium fredii (strain NBRC 101917 / NGR234).